A 341-amino-acid polypeptide reads, in one-letter code: Probable membrane-associated kinase regulator 1 (341 aa).

Disordered regions lie at residues 1 to 29 (MRRQ…FEFN), 67 to 122 (TLGS…SSRP), 158 to 185 (PKTN…KRMS), 206 to 230 (LSPK…NNIR), and 288 to 310 (RGGF…SVSS). Low complexity-rich tracts occupy residues 12–29 (PPQS…FEFN), 67–108 (TLGS…SFPL), and 167–180 (SSSS…APSS). Positions 208–230 (PKQSSNIKTESSSSLKDSGNNIR) are enriched in polar residues. Low complexity predominate over residues 297 to 310 (SCSSSSSNNNSVSS).

In terms of assembly, a C-terminus-derived peptide binds BRI1 in vitro.

It is found in the cell membrane. In terms of biological role, may negatively regulate brassinosteroid signaling. This chain is Probable membrane-associated kinase regulator 1 (MAKR1), found in Arabidopsis thaliana (Mouse-ear cress).